The sequence spans 42 residues: Large ribosomal subunit protein bL36 (42 aa).

Belongs to the bacterial ribosomal protein bL36 family.

The chain is Large ribosomal subunit protein bL36 from Anaplasma marginale (strain St. Maries).